Here is an 879-residue protein sequence, read N- to C-terminus: Protein translocase subunit SecA (879 aa).

ATP contacts are provided by residues glutamine 86, 104 to 108 (GEGKT), and aspartate 500. Positions 863, 865, 874, and 875 each coordinate Zn(2+).

It belongs to the SecA family. As to quaternary structure, monomer and homodimer. Part of the essential Sec protein translocation apparatus which comprises SecA, SecYEG and auxiliary proteins SecDF-YajC and YidC. Requires Zn(2+) as cofactor.

The protein localises to the cell inner membrane. The protein resides in the cytoplasm. The catalysed reaction is ATP + H2O + cellular proteinSide 1 = ADP + phosphate + cellular proteinSide 2.. Functionally, part of the Sec protein translocase complex. Interacts with the SecYEG preprotein conducting channel. Has a central role in coupling the hydrolysis of ATP to the transfer of proteins into and across the cell membrane, serving both as a receptor for the preprotein-SecB complex and as an ATP-driven molecular motor driving the stepwise translocation of polypeptide chains across the membrane. This is Protein translocase subunit SecA from Orientia tsutsugamushi (strain Ikeda) (Rickettsia tsutsugamushi).